The sequence spans 60 residues: RDNTTCDGPCGIRFRQNRXXXXRIIGGQDAAHGSWPWMVSLQIFTYHNNRRYHVCGGSLL.

N-linked (GlcNAc...) asparagine glycosylation occurs at Asn-3. In terms of domain architecture, Peptidase S1 spans 24 to 60 (IIGGQDAAHGSWPWMVSLQIFTYHNNRRYHVCGGSLL).

Belongs to the peptidase S1 family. Heavy chain (catalytic) and a light chain linked by two disulfide bonds. Forms a heterodimer with SERPINA5.

The enzyme catalyses Preferential cleavage: Arg-|-Xaa, Lys-|-Xaa.. Inhibited by SERPINA5. Acrosin is the major protease of mammalian spermatozoa. It is a serine protease of trypsin-like cleavage specificity, it is synthesized in a zymogen form, proacrosin and stored in the acrosome. The protein is Acrosin (ACR) of Capra hircus (Goat).